The chain runs to 112 residues: Small capsomere-interacting protein (112 aa).

It belongs to the herpesviridae small capsomere-interacting protein family. Interacts with the major capsid protein/MCP.

The protein localises to the virion. It is found in the host nucleus. Its function is as follows. Participates in the assembly of the infectious particles by decorating the outer surface of the capsid shell and thus forming a layer between the capsid and the tegument. Complexes composed of the major capsid protein and small capsomere-interacting protein/SCP assemble together in the host cytoplasm and are translocated to the nucleus, where they accumulate and participate in capsid assembly. This is Small capsomere-interacting protein from Homo sapiens (Human).